Here is a 428-residue protein sequence, read N- to C-terminus: Chaperone SurA (428 aa).

Residues 1–13 form the signal peptide; that stretch reads MLGALLLSGAVHA. 2 PpiC domains span residues 164 to 265 and 276 to 375; these read SEEF…KLLE and RDEV…EVLG.

The protein resides in the periplasm. The enzyme catalyses [protein]-peptidylproline (omega=180) = [protein]-peptidylproline (omega=0). Functionally, chaperone involved in the correct folding and assembly of outer membrane proteins. Recognizes specific patterns of aromatic residues and the orientation of their side chains, which are found more frequently in integral outer membrane proteins. May act in both early periplasmic and late outer membrane-associated steps of protein maturation. This is Chaperone SurA from Pseudomonas savastanoi pv. phaseolicola (strain 1448A / Race 6) (Pseudomonas syringae pv. phaseolicola (strain 1448A / Race 6)).